A 1803-amino-acid polypeptide reads, in one-letter code: 6-methylsalicylic acid synthase (1803 aa).

Positions 1-40 are disordered; sequence MEVHGDEVLSVDSGVSTPPSTGSGFRRPLETPGTEIGNLN. Residues 13–24 show a composition bias toward low complexity; sequence SGVSTPPSTGSG. The Ketosynthase family 3 (KS3) domain occupies 44–470; sequence QNEVAVVGMA…GTVSHAIIEE (427 aa). Catalysis depends on for beta-ketoacyl synthase activity residues Cys216, His351, and His391. The 314-residue stretch at 581–894 folds into the Malonyl-CoA:ACP transacylase (MAT) domain; sequence VWVFSGHGAQ…SIAQLHCRGA (314 aa). Catalysis depends on Ser667, which acts as the For malonyltransferase activity. The N-terminal hotdog fold stretch occupies residues 940 to 1058; that stretch reads HTLLGQRVPV…GQWEAGGSKN (119 aa). The region spanning 940–1218 is the PKS/mFAS DH domain; it reads HTLLGQRVPV…FSEIEGTPGS (279 aa). The active-site Proton acceptor; for thioesterase activity is the His972. Residues 1073–1218 form a C-terminal hotdog fold region; sequence ANNKLADNFS…FSEIEGTPGS (146 aa). Asp1129 acts as the Proton donor; for thioesterase activity in catalysis. The tract at residues 1141–1262 is required for homotetramer formation; sequence TSVGSTLFFD…KNVADLYCGS (122 aa). Positions 1434 to 1628 constitute a Ketoreductase (KR) domain; that stretch reads STYLITGGLG…AVAVQWTSWR (195 aa). The segment covering 1701-1710 has biased composition (low complexity); it reads ASSADAPSAA. Residues 1701–1721 form a disordered region; that stretch reads ASSADAPSAAPKETNEMPESI. Residues 1726–1801 enclose the Carrier domain; that stretch reads TWLDERIRDC…HLVGWFLEKM (76 aa). Ser1761 is subject to O-(pantetheine 4'-phosphoryl)serine. Residues 1783–1803 form a required for catalytic activity region; sequence LTWSCPTVSHLVGWFLEKMGN.

In terms of assembly, homotetramer.

It carries out the reaction 3 malonyl-CoA + acetyl-CoA + NADPH + 3 H(+) = 6-methylsalicylate + 3 CO2 + NADP(+) + 4 CoA + H2O. It participates in secondary metabolite biosynthesis. Functionally, 6-methylsalicylic acid synthase; part of the gene cluster that mediates the biosynthesis of terreic acid, a quinone epoxide inhibitor of Bruton's tyrosine kinase. The first step of the pathway is the synthesis of 6-methylsalicylic acid (6-MSA) by the 6-methylsalicylic acid synthase atX. In the biosynthesis of 6-MSA, atX utilizes one acetyl-CoA and three malonyl-CoAs as its substrates and catalyzes a series of programmed reactions including Claisen condensation, reduction, aldol cyclization, and the hydrolytic cleavage that yields 6-MSA. The 6-methylsalicylate 1-monooxygenase atA then catalyzes the decarboxylative hydroxylation of 6-MSA to 3-methylcatechol. The next step is the conversion of 3-methylcatechol to 3-methyl-1,2,4-benzenetriol by cytochrome P450 monooxygenase atE, which is enhanced by cytochrome P450 monooxygenase atG. Then, the epoxidase atD catalyzes the epoxidation and hydroxyl oxidation of 3-methyl-1,2,4-benzenetriol to terremutin. Lastly, GMC oxidoreductase atC oxidizes terremutin to terreic acid. The sequence is that of 6-methylsalicylic acid synthase from Aspergillus terreus (strain NIH 2624 / FGSC A1156).